A 508-amino-acid chain; its full sequence is Photosystem II CP47 reaction center protein (508 aa).

The next 6 membrane-spanning stretches (helical) occupy residues 21–36 (SVHL…WAGS), 101–115 (IVLS…IWHW), 140–156 (GIHL…FGAF), 203–218 (IAAG…FHLS), 237–252 (VLSS…AFVV), and 457–472 (TFAL…HGAR).

This sequence belongs to the PsbB/PsbC family. PsbB subfamily. As to quaternary structure, PSII is composed of 1 copy each of membrane proteins PsbA, PsbB, PsbC, PsbD, PsbE, PsbF, PsbH, PsbI, PsbJ, PsbK, PsbL, PsbM, PsbT, PsbX, PsbY, PsbZ, Psb30/Ycf12, at least 3 peripheral proteins of the oxygen-evolving complex and a large number of cofactors. It forms dimeric complexes. Binds multiple chlorophylls. PSII binds additional chlorophylls, carotenoids and specific lipids. is required as a cofactor.

The protein resides in the plastid. Its subcellular location is the chloroplast thylakoid membrane. Functionally, one of the components of the core complex of photosystem II (PSII). It binds chlorophyll and helps catalyze the primary light-induced photochemical processes of PSII. PSII is a light-driven water:plastoquinone oxidoreductase, using light energy to abstract electrons from H(2)O, generating O(2) and a proton gradient subsequently used for ATP formation. The sequence is that of Photosystem II CP47 reaction center protein from Angiopteris evecta (Mule's foot fern).